A 349-amino-acid polypeptide reads, in one-letter code: Lachesin (349 aa).

Positions 1–18 (MDLRLYTIFVGFFSVVYA) are cleaved as a signal peptide. The 106-residue stretch at 22–127 (PTISYISQEQ…NKITAEVDLQ (106 aa)) folds into the Ig-like V-type domain. Cys-43 and Cys-110 are disulfide-bonded. Ig-like C2-type domains lie at 132–218 (PVIS…IAVE) and 222–315 (PPVI…VELF). The N-linked (GlcNAc...) asparagine glycan is linked to Asn-137. 2 cysteine pairs are disulfide-bonded: Cys-154/Cys-201 and Cys-244/Cys-299. Gly-332 carries GPI-anchor amidated glycine lipidation. Residues 333–349 (DAAEISTSMALILISTI) constitute a propeptide, removed in mature form.

The N-terminus is blocked. Expressed by all neurogenic cells early, but only those cells that become neuroblasts continue to express it. Expressed by neuroblasts, ganglion mother cells and neurons early in their lives, but expression becomes restricted to a subset of neurons as development progresses. Expressed by sensory neurons as they delaminate from the body wall ectoderm. It is also present on growing axons of the CNS and PNS and becomes restricted to a subset of axons later in development.

The protein resides in the cell membrane. Its function is as follows. May play a role in early neuronal differentiation and axon outgrowth. The protein is Lachesin (LAC) of Schistocerca americana (American grasshopper).